Consider the following 448-residue polypeptide: Methionine aminopeptidase 2-1 (448 aa).

A disordered region spans residues Met1–Phe90. Positions Ala22–Ala33 are enriched in low complexity. Residues Gly34 to Asp46 are compositionally biased toward acidic residues. Residues Ala47–Ala58 show a composition bias toward low complexity. A compositionally biased stretch (basic residues) spans Ala59 to Gly74. Residues Ala75–Ser88 are compositionally biased toward low complexity. Residue His198 participates in substrate binding. Residues Asp218, Asp229, and His301 each coordinate a divalent metal cation. His309 serves as a coordination point for substrate. Residues Glu334 and Glu429 each coordinate a divalent metal cation.

It belongs to the peptidase M24A family. Methionine aminopeptidase eukaryotic type 2 subfamily. Co(2+) is required as a cofactor. Zn(2+) serves as cofactor. The cofactor is Mn(2+). It depends on Fe(2+) as a cofactor.

The protein resides in the cytoplasm. The catalysed reaction is Release of N-terminal amino acids, preferentially methionine, from peptides and arylamides.. Functionally, cotranslationally removes the N-terminal methionine from nascent proteins. The N-terminal methionine is often cleaved when the second residue in the primary sequence is small and uncharged (Met-Ala-, Cys, Gly, Pro, Ser, Thr, or Val). The sequence is that of Methionine aminopeptidase 2-1 from Emericella nidulans (strain FGSC A4 / ATCC 38163 / CBS 112.46 / NRRL 194 / M139) (Aspergillus nidulans).